Reading from the N-terminus, the 607-residue chain is MALLIITALVFSSLWSSVSPDAQGDALFALRSSLRASPEQLSDWNQNQVDPCTWSQVICDDKKHVTSVTLSYMNFSSGTLSSGIGILTTLKTLTLKGNGIMGGIPESIGNLSSLTSLDLEDNHLTDRIPSTLGNLKNLQFLTLSRNNLNGSIPDSLTGLSKLINILLDSNNLSGEIPQSLFKIPKYNFTANNLSCGGTFPQPCVTESSPSGDSSSRKTGIIAGVVSGIAVILLGFFFFFFCKDKHKGYKRDVFVDVAGEVDRRIAFGQLRRFAWRELQLATDEFSEKNVLGQGGFGKVYKGLLSDGTKVAVKRLTDFERPGGDEAFQREVEMISVAVHRNLLRLIGFCTTQTERLLVYPFMQNLSVAYCLREIKPGDPVLDWFRRKQIALGAARGLEYLHEHCNPKIIHRDVKAANVLLDEDFEAVVGDFGLAKLVDVRRTNVTTQVRGTMGHIAPECISTGKSSEKTDVFGYGIMLLELVTGQRAIDFSRLEEEDDVLLLDHVKKLEREKRLEDIVDKKLDEDYIKEEVEMMIQVALLCTQAAPEERPAMSEVVRMLEGEGLAERWEEWQNLEVTRQEEFQRLQRRFDWGEDSINNQDAIELSGGR.

The first 24 residues, 1-24 (MALLIITALVFSSLWSSVSPDAQG), serve as a signal peptide directing secretion. Residues 25–219 (DALFALRSSL…SGDSSSRKTG (195 aa)) lie on the Extracellular side of the membrane. Residues N74 and N110 are each glycosylated (N-linked (GlcNAc...) asparagine). LRR repeat units lie at residues 87–111 (LTTLKTLTLKGNGIMGGIPESIGNL), 112–135 (SSLTSLDLEDNHLTDRIPSTLGNL), 137–159 (NLQFLTLSRNNLNGSIPDSLTGL), and 160–183 (SKLINILLDSNNLSGEIPQSLFKI). N149, N171, N187, and N192 each carry an N-linked (GlcNAc...) asparagine glycan. Residues 220–240 (IIAGVVSGIAVILLGFFFFFF) form a helical membrane-spanning segment. At 241 to 607 (CKDKHKGYKR…QDAIELSGGR (367 aa)) the chain is on the cytoplasmic side. T281 bears the Phosphothreonine mark. The Protein kinase domain maps to 284–568 (FSEKNVLGQG…EGEGLAERWE (285 aa)). 290–298 (LGQGGFGKV) provides a ligand contact to ATP. At T307 the chain carries Phosphothreonine. Residue K312 coordinates ATP. S365 bears the Phosphoserine mark. The active-site Proton acceptor is the D411. A phosphothreonine mark is found at T444, T445, and T450. S460 carries the post-translational modification Phosphoserine. T461 bears the Phosphothreonine mark. S465 is modified (phosphoserine). T541 is modified (phosphothreonine).

The protein belongs to the protein kinase superfamily. Ser/Thr protein kinase family.

It is found in the cell membrane. The catalysed reaction is L-seryl-[protein] + ATP = O-phospho-L-seryl-[protein] + ADP + H(+). It catalyses the reaction L-threonyl-[protein] + ATP = O-phospho-L-threonyl-[protein] + ADP + H(+). The chain is Probable LRR receptor-like serine/threonine-protein kinase At5g65240 from Arabidopsis thaliana (Mouse-ear cress).